A 395-amino-acid chain; its full sequence is Major capsid protein P3 (395 aa).

Homotrimer.

It is found in the virion. Its function is as follows. Major capsid protein self-assembles to form an icosahedral capsid with a pseudo T=25 symmetry, about 66 nm in diameter, and consisting of 240 capsid proteins trimers. The capsid encapsulates an inner membrane and the genomic dsDNA genome. The major coat protein P3 and two assembly factors (P10 and P17) are needed during the assembly of the virus particle inside the host cell, when the capsid protein multimers are capable of enclosing the host-derived membrane, containing the virus-encoded membrane-associated proteins. This Acinetobacter calcoaceticus (Arthrobacter siderocapsulatus) protein is Major capsid protein P3 (III).